The primary structure comprises 321 residues: Eukaryotic translation initiation factor 3 subunit I (321 aa).

WD repeat units lie at residues 8–47 (GHER…RLGT), 50–89 (GHGG…TLSK), 140–179 (VDNS…KLIS), 182–221 (EHSK…HLKT), and 279–318 (GHFG…DDIE).

It belongs to the eIF-3 subunit I family. Component of the eukaryotic translation initiation factor 3 (eIF-3) complex.

The protein resides in the cytoplasm. Functionally, component of the eukaryotic translation initiation factor 3 (eIF-3) complex, which is involved in protein synthesis of a specialized repertoire of mRNAs and, together with other initiation factors, stimulates binding of mRNA and methionyl-tRNAi to the 40S ribosome. The eIF-3 complex specifically targets and initiates translation of a subset of mRNAs involved in cell proliferation. The polypeptide is Eukaryotic translation initiation factor 3 subunit I (Nematostella vectensis (Starlet sea anemone)).